A 255-amino-acid chain; its full sequence is Electron transfer flavoprotein subunit beta (255 aa).

At alanine 2 the chain carries N-acetylalanine. Residues alanine 9, 39 to 42 (NPFC), cysteine 66, and 123 to 134 (GKQAIDDDCNQT) each bind AMP. The interval 183–205 (ADLRLNEPRYATLPNIMKAKKKK) is recognition loop. Lysine 200 is subject to N6,N6,N6-trimethyllysine; by ETFBKMT; alternate. Lysine 200 carries the N6-acetyllysine; alternate modification. At lysine 200 the chain carries N6-methyllysine; alternate. Lysine 203 carries the N6,N6,N6-trimethyllysine; by ETFBKMT modification. Lysine 210 is subject to N6-acetyllysine; alternate. An N6-succinyllysine; alternate modification is found at lysine 210. Phosphoserine occurs at positions 223 and 226. Position 238 is an N6-acetyllysine (lysine 238). N6-acetyllysine; alternate is present on lysine 248. Lysine 248 is modified (N6-succinyllysine; alternate).

The protein belongs to the ETF beta-subunit/FixA family. Heterodimer composed of ETFA and ETFB. Identified in a complex that contains ETFA, ETFB and ETFRF1. Interacts with ACADM. Methylated. Trimethylation at Lys-200 and Lys-203 may negatively regulate the activity in electron transfer from acyl-CoA dehydrogenases.

It localises to the mitochondrion matrix. Heterodimeric electron transfer flavoprotein that accepts electrons from several mitochondrial dehydrogenases, including acyl-CoA dehydrogenases, glutaryl-CoA and sarcosine dehydrogenase. It transfers the electrons to the main mitochondrial respiratory chain via ETF-ubiquinone oxidoreductase. Required for normal mitochondrial fatty acid oxidation and normal amino acid metabolism. ETFB binds an AMP molecule that probably has a purely structural role. This is Electron transfer flavoprotein subunit beta from Bos taurus (Bovine).